Consider the following 181-residue polypeptide: Large ribosomal subunit protein uL5 (181 aa).

It belongs to the universal ribosomal protein uL5 family. As to quaternary structure, part of the 50S ribosomal subunit; part of the 5S rRNA/L5/L18/L25 subcomplex. Contacts the 5S rRNA and the P site tRNA. Forms a bridge to the 30S subunit in the 70S ribosome.

This is one of the proteins that bind and probably mediate the attachment of the 5S RNA into the large ribosomal subunit, where it forms part of the central protuberance. In the 70S ribosome it contacts protein S13 of the 30S subunit (bridge B1b), connecting the 2 subunits; this bridge is implicated in subunit movement. Contacts the P site tRNA; the 5S rRNA and some of its associated proteins might help stabilize positioning of ribosome-bound tRNAs. This is Large ribosomal subunit protein uL5 from Helicobacter pylori (strain ATCC 700392 / 26695) (Campylobacter pylori).